The primary structure comprises 193 residues: Protein Syd (193 aa).

It belongs to the Syd family.

Its subcellular location is the cell inner membrane. Its function is as follows. Interacts with the SecY protein in vivo. May bind preferentially to an uncomplexed state of SecY, thus functioning either as a chelating agent for excess SecY in the cell or as a regulatory factor that negatively controls the translocase function. This Tolumonas auensis (strain DSM 9187 / NBRC 110442 / TA 4) protein is Protein Syd.